The primary structure comprises 1054 residues: Cell wall acid trehalase ARB_03719 (1054 aa).

Residues 1–24 (MKQPNINLAACILWLLSIITAVAA) form the signal peptide. Asn-138, Asn-178, Asn-183, Asn-207, Asn-239, Asn-277, and Asn-309 each carry an N-linked (GlcNAc...) asparagine glycan. Residue 450–451 (WD) coordinates substrate. Asn-495, Asn-515, Asn-572, and Asn-580 each carry an N-linked (GlcNAc...) asparagine glycan. Catalysis depends on Glu-586, which acts as the Proton donor. 2 N-linked (GlcNAc...) asparagine glycosylation sites follow: Asn-620 and Asn-648. Residue 654 to 655 (KQ) coordinates substrate. Asn-808 and Asn-844 each carry an N-linked (GlcNAc...) asparagine glycan. Positions 950-974 (PLHPVTDPENGDASGSSPTTPASSV) are disordered. Over residues 962–974 (ASGSSPTTPASSV) the composition is skewed to low complexity. N-linked (GlcNAc...) asparagine glycosylation is found at Asn-1004, Asn-1007, and Asn-1039.

Belongs to the glycosyl hydrolase 65 family.

The protein localises to the secreted. The protein resides in the cell wall. It carries out the reaction alpha,alpha-trehalose + H2O = alpha-D-glucose + beta-D-glucose. In terms of biological role, cell wall acid trehalase that catalyzes hydrolysis of the disaccharide trehalose and required for growth on trehalose as carbon source. Plays a role in virulence. The polypeptide is Cell wall acid trehalase ARB_03719 (Arthroderma benhamiae (strain ATCC MYA-4681 / CBS 112371) (Trichophyton mentagrophytes)).